The following is a 406-amino-acid chain: 2,3-bisphosphoglycerate-independent phosphoglycerate mutase (406 aa).

Residues 164 to 184 are disordered; that stretch reads VSSNDPKKTGVQPKTIHPDDD.

Belongs to the BPG-independent phosphoglycerate mutase family. A-PGAM subfamily.

It carries out the reaction (2R)-2-phosphoglycerate = (2R)-3-phosphoglycerate. The protein operates within carbohydrate degradation; glycolysis; pyruvate from D-glyceraldehyde 3-phosphate: step 3/5. Functionally, catalyzes the interconversion of 2-phosphoglycerate and 3-phosphoglycerate. The polypeptide is 2,3-bisphosphoglycerate-independent phosphoglycerate mutase (Methanocorpusculum labreanum (strain ATCC 43576 / DSM 4855 / Z)).